Reading from the N-terminus, the 209-residue chain is Nascent polypeptide-associated complex subunit alpha (209 aa).

Residues 1 to 21 show a composition bias toward basic and acidic residues; the sequence is MSNPRVEELPDEEPKKTTVQE. Disordered regions lie at residues 1–51 and 121–175; these read MSNP…HNRN and QLAS…DKDI. Over residues 22–36 the composition is skewed to acidic residues; the sequence is HEDDSSDDSEVEEVG. The NAC-A/B domain occupies 49–114; the sequence is NRNEKKARKA…AKIEDVNAAA (66 aa). Residues 127 to 150 show a composition bias toward basic and acidic residues; sequence AEDHSGHNHGEPSKAVEADEKKED. The segment covering 151 to 166 has biased composition (acidic residues); it reads KEDDEDEEEEEEEEVD. The region spanning 170 to 209 is the UBA domain; the sequence is LEDKDIELVMTQANVSRNKAVKALKENDNDIVNSIMALSI.

This sequence belongs to the NAC-alpha family. In terms of assembly, part of the nascent polypeptide-associated complex (NAC), consisting of EGD2 and EGD1. NAC associates with ribosomes via EGD1.

It localises to the cytoplasm. Its subcellular location is the nucleus. Functionally, component of the nascent polypeptide-associated complex (NAC), a dynamic component of the ribosomal exit tunnel, protecting the emerging polypeptides from interaction with other cytoplasmic proteins to ensure appropriate nascent protein targeting. The NAC complex also promotes mitochondrial protein import by enhancing productive ribosome interactions with the outer mitochondrial membrane and blocks the inappropriate interaction of ribosomes translating non-secretory nascent polypeptides with translocation sites in the membrane of the endoplasmic reticulum. EGD2 may also be involved in transcription regulation. The protein is Nascent polypeptide-associated complex subunit alpha (EGD2) of Gibberella zeae (strain ATCC MYA-4620 / CBS 123657 / FGSC 9075 / NRRL 31084 / PH-1) (Wheat head blight fungus).